The primary structure comprises 287 residues: Glycine--tRNA ligase alpha subunit (287 aa).

Belongs to the class-II aminoacyl-tRNA synthetase family. As to quaternary structure, tetramer of two alpha and two beta subunits.

The protein resides in the cytoplasm. It catalyses the reaction tRNA(Gly) + glycine + ATP = glycyl-tRNA(Gly) + AMP + diphosphate. In Campylobacter jejuni subsp. jejuni serotype O:23/36 (strain 81-176), this protein is Glycine--tRNA ligase alpha subunit.